A 325-amino-acid chain; its full sequence is Peroxidase 1 (325 aa).

The first 21 residues, 1–21 (MAIKNILALVVLLSVVGVSVA), serve as a signal peptide directing secretion. Intrachain disulfides connect Cys35/Cys113, Cys68/Cys73, Cys119/Cys321, and Cys198/Cys230. The active-site Proton acceptor is the His66. The Ca(2+) site is built by Asp67, Val70, Gly72, Asp74, and Ser76. Position 161 (Pro161) interacts with substrate. Position 191 (His191) interacts with heme b. Thr192 lines the Ca(2+) pocket. A glycan (N-linked (GlcNAc...) asparagine) is linked at Asn207. Residues Asp242, Ser245, and Asp250 each contribute to the Ca(2+) site.

It belongs to the peroxidase family. Classical plant (class III) peroxidase subfamily. Heme b is required as a cofactor. Requires Ca(2+) as cofactor. Slightly expressed in roots.

It localises to the secreted. The catalysed reaction is 2 a phenolic donor + H2O2 = 2 a phenolic radical donor + 2 H2O. Functionally, removal of H(2)O(2), oxidation of toxic reductants, biosynthesis and degradation of lignin, suberization, auxin catabolism, response to environmental stresses such as wounding, pathogen attack and oxidative stress. These functions might be dependent on each isozyme/isoform in each plant tissue. The chain is Peroxidase 1 (PER1) from Arabidopsis thaliana (Mouse-ear cress).